Here is a 116-residue protein sequence, read N- to C-terminus: Toxin CSTX-10 (116 aa).

Positions 1-20 (MKVLVIFAVLSLVIFSNCSA) are cleaved as a signal peptide. Positions 21–47 (ETDEDFFGEESFEADDIIPFIAKEQVR) are excised as a propeptide. 4 disulfide bridges follow: cysteine 53/cysteine 68, cysteine 60/cysteine 77, cysteine 67/cysteine 94, and cysteine 79/cysteine 92.

Expressed by the venom gland.

It localises to the secreted. It is found in the target cell membrane. Functionally, spider venom toxin that shows calcium channel blocking activity and exhibits cytolytic activity by affecting the outer leaflet curvature and/or pore formation across the membrane. It blocks L-type calcium channels (Cav1/CACNA1) in mammalian neurons at nanomolar concentrations. Furthermore, it produces a slow voltage-independent block of mid/low and high voltage-activated calcium channels in cockroach neurons. Potassium ions, histamine, M-ctenitoxin-Cs1a (AC P83619), CSTX-9 (AC P58604), and CSTX-13 (AC P83919) synergistically increase the insecticidal activity of this toxin. In vivo, it causes paralysis in blow flies and provokes death in drosophila. The polypeptide is Toxin CSTX-10 (Cupiennius salei (American wandering spider)).